A 221-amino-acid polypeptide reads, in one-letter code: Large ribosomal subunit protein uL3 (221 aa).

The disordered stretch occupies residues 131–165 (HNQSRGPETHGSRHHRRPGSMGPIKGKIKGKKLPG).

The protein belongs to the universal ribosomal protein uL3 family. In terms of assembly, part of the 50S ribosomal subunit. Forms a cluster with proteins L14 and L19.

Functionally, one of the primary rRNA binding proteins, it binds directly near the 3'-end of the 23S rRNA, where it nucleates assembly of the 50S subunit. The polypeptide is Large ribosomal subunit protein uL3 (Phytoplasma australiense).